The following is a 190-amino-acid chain: Peptidyl-tRNA hydrolase (190 aa).

A tRNA-binding site is contributed by Phe-14. Catalysis depends on His-19, which acts as the Proton acceptor. 3 residues coordinate tRNA: Met-64, Asn-66, and Asn-112.

This sequence belongs to the PTH family. In terms of assembly, monomer.

It is found in the cytoplasm. The enzyme catalyses an N-acyl-L-alpha-aminoacyl-tRNA + H2O = an N-acyl-L-amino acid + a tRNA + H(+). Hydrolyzes ribosome-free peptidyl-tRNAs (with 1 or more amino acids incorporated), which drop off the ribosome during protein synthesis, or as a result of ribosome stalling. In terms of biological role, catalyzes the release of premature peptidyl moieties from peptidyl-tRNA molecules trapped in stalled 50S ribosomal subunits, and thus maintains levels of free tRNAs and 50S ribosomes. This Staphylococcus saprophyticus subsp. saprophyticus (strain ATCC 15305 / DSM 20229 / NCIMB 8711 / NCTC 7292 / S-41) protein is Peptidyl-tRNA hydrolase.